The following is a 23-amino-acid chain: Cysteine-rich venom protein 24 (23 aa).

Residues 1-23 (VDFASESXNKRENQQIVDKHNAL) form a disordered region. Basic and acidic residues predominate over residues 8–23 (XNKRENQQIVDKHNAL).

The protein belongs to the CRISP family. Contains 8 disulfide bonds. Expressed by the venom gland.

It is found in the secreted. The sequence is that of Cysteine-rich venom protein 24 from Naja kaouthia (Monocled cobra).